Consider the following 189-residue polypeptide: Thioredoxin-like protein CITRX, chloroplastic (189 aa).

Residues Met1–Ser36 constitute a chloroplast transit peptide. Residues Gly72 to Leu189 form the Thioredoxin domain. Catalysis depends on nucleophile residues Cys112 and Cys115. A disulfide bridge connects residues Cys112 and Cys115.

The protein belongs to the thioredoxin family. Plant CITRX-type subfamily.

Its subcellular location is the plastid. The protein resides in the chloroplast. Its function is as follows. Probable thiol-disulfide oxidoreductase that may play a role in proper chloroplast development. The sequence is that of Thioredoxin-like protein CITRX, chloroplastic from Oryza sativa subsp. indica (Rice).